A 274-amino-acid polypeptide reads, in one-letter code: MTLQEEIIKELGVKPIIDPKEEIRVSVDFLKDYLKKYPFIKSFVLGISGGQDSSLAGRLAQIAIEEMRQETADASYKFVAVRLPFGVQADEEDAQRALAFIKPDVSLAVNIKAAVEGQVAALNEAGVEVSDFNKGNIKARQRMITQYAVAGQYQGAVLGTDHAAENITGFFTKFGDGGADLLPLFRLNKRQGKALLAELGADPAIYEKVPTADLEEGKPGLADEIALGVTYNDIDDYTEGKVISDDAKAKIEAWWNKTQHKRHLPISIFDDFWK.

Position 46 to 53 (46 to 53 (GISGGQDS)) interacts with ATP. Aspartate 52 is a binding site for Mg(2+). Deamido-NAD(+) is bound at residue arginine 140. ATP is bound at residue threonine 160. Glutamate 165 serves as a coordination point for Mg(2+). Deamido-NAD(+) is bound by residues lysine 173 and aspartate 180. ATP is bound by residues lysine 189 and threonine 211. 260-261 (HK) provides a ligand contact to deamido-NAD(+).

This sequence belongs to the NAD synthetase family. In terms of assembly, homodimer.

The enzyme catalyses deamido-NAD(+) + NH4(+) + ATP = AMP + diphosphate + NAD(+) + H(+). It participates in cofactor biosynthesis; NAD(+) biosynthesis; NAD(+) from deamido-NAD(+) (ammonia route): step 1/1. Functionally, catalyzes the ATP-dependent amidation of deamido-NAD to form NAD. Uses ammonia as a nitrogen source. The sequence is that of NH(3)-dependent NAD(+) synthetase from Lactococcus lactis subsp. cremoris (strain MG1363).